The following is a 321-amino-acid chain: Probable pectate lyase A (321 aa).

The N-terminal stretch at 1-18 (MKFVATLIACGLSGLALA) is a signal peptide. N93 carries N-linked (GlcNAc...) asparagine glycosylation. 3 residues coordinate Ca(2+): D134, D163, and D167. The active site involves R220. The N-linked (GlcNAc...) asparagine glycan is linked to N238.

The protein belongs to the polysaccharide lyase 1 family. It depends on Ca(2+) as a cofactor.

It is found in the secreted. It catalyses the reaction Eliminative cleavage of (1-&gt;4)-alpha-D-galacturonan to give oligosaccharides with 4-deoxy-alpha-D-galact-4-enuronosyl groups at their non-reducing ends.. Functionally, pectinolytic enzyme consist of four classes of enzymes: pectin lyase, polygalacturonase, pectin methylesterase and rhamnogalacturonase. Among pectinolytic enzymes, pectin lyase is the most important in depolymerization of pectin, since it cleaves internal glycosidic bonds of highly methylated pectins. Favors pectate, the anion, over pectin, the methyl ester. The protein is Probable pectate lyase A (plyA) of Aspergillus fumigatus (strain CBS 144.89 / FGSC A1163 / CEA10) (Neosartorya fumigata).